Consider the following 95-residue polypeptide: UPF0298 protein LVIS_1401 (95 aa).

This sequence belongs to the UPF0298 family.

It is found in the cytoplasm. The sequence is that of UPF0298 protein LVIS_1401 from Levilactobacillus brevis (strain ATCC 367 / BCRC 12310 / CIP 105137 / JCM 1170 / LMG 11437 / NCIMB 947 / NCTC 947) (Lactobacillus brevis).